The sequence spans 330 residues: Ribosomal RNA small subunit methyltransferase H (330 aa).

S-adenosyl-L-methionine contacts are provided by residues 50 to 52 (GGH), Asp69, Leu103, Asp117, and Gln124.

The protein belongs to the methyltransferase superfamily. RsmH family.

It is found in the cytoplasm. The catalysed reaction is cytidine(1402) in 16S rRNA + S-adenosyl-L-methionine = N(4)-methylcytidine(1402) in 16S rRNA + S-adenosyl-L-homocysteine + H(+). Specifically methylates the N4 position of cytidine in position 1402 (C1402) of 16S rRNA. The polypeptide is Ribosomal RNA small subunit methyltransferase H (Saccharopolyspora erythraea (strain ATCC 11635 / DSM 40517 / JCM 4748 / NBRC 13426 / NCIMB 8594 / NRRL 2338)).